The primary structure comprises 605 residues: Conglutin beta 7 (605 aa).

The signal sequence occupies residues 1 to 30; it reads MARMRVRFPTLVLLLGILFLMAVSIGIAYG. Basic and acidic residues predominate over residues 37–105; the sequence is NHERPGEREH…REPCREREQE (69 aa). Disordered regions lie at residues 37 to 193, 346 to 367, and 382 to 405; these read NHER…RFQT, LGNE…SYQD, and LRKH…NLRS. Over residues 140 to 149 the composition is skewed to low complexity; sequence QGSSSSSRKQ. The span at 150–179 shows a compositional bias: basic and acidic residues; the sequence is SGYERRQYHERREQRDEKEKEQDSRSDSRR. The 159-residue stretch at 184-342 folds into the Cupin type-1 1 domain; it reads YHFSSERFQT…TFNTRYEEIQ (159 aa). The Cupin type-1 2 domain maps to 401-563; the sequence is FNLRSNESIY…TFPGSAQDVE (163 aa). Asn-406 and Asn-513 each carry an N-linked (GlcNAc...) asparagine glycan. The disordered stretch occupies residues 574–593; that stretch reads FANAQPQQKQQREKEGRRGR.

Belongs to the 7S seed storage protein family. In terms of assembly, component of globulins complexes which accumulate in seeds.

Its function is as follows. Seed storage protein. Accumulates during seed development and is hydrolyzed after germination to provide a carbon and nitrogen source for the developing seedling. The protein is Conglutin beta 7 of Lupinus angustifolius (Narrow-leaved blue lupine).